Consider the following 253-residue polypeptide: Large ribosomal subunit protein uL1m (253 aa).

The N-terminal 81 residues, 1–81, are a transit peptide targeting the mitochondrion; it reads MSSLIALGKR…SIALKSNRRA (81 aa).

This sequence belongs to the universal ribosomal protein uL1 family. As to quaternary structure, component of the mitochondrial large ribosomal subunit (mt-LSU). Mature yeast 74S mitochondrial ribosomes consist of a small (37S) and a large (54S) subunit. The 37S small subunit contains a 15S ribosomal RNA (15S mt-rRNA) and at least 32 different proteins. The 54S large subunit contains a 21S rRNA (21S mt-rRNA) and at least 45 different proteins.

Its subcellular location is the mitochondrion. In terms of biological role, component of the mitochondrial ribosome (mitoribosome), a dedicated translation machinery responsible for the synthesis of mitochondrial genome-encoded proteins, including at least some of the essential transmembrane subunits of the mitochondrial respiratory chain. The mitoribosomes are attached to the mitochondrial inner membrane and translation products are cotranslationally integrated into the membrane. This Schizosaccharomyces pombe (strain 972 / ATCC 24843) (Fission yeast) protein is Large ribosomal subunit protein uL1m (mrpl1).